A 140-amino-acid chain; its full sequence is 3-hydroxyacyl-[acyl-carrier-protein] dehydratase FabZ (140 aa).

The active site involves His-48.

This sequence belongs to the thioester dehydratase family. FabZ subfamily.

Its subcellular location is the cytoplasm. It carries out the reaction a (3R)-hydroxyacyl-[ACP] = a (2E)-enoyl-[ACP] + H2O. In terms of biological role, involved in unsaturated fatty acids biosynthesis. Catalyzes the dehydration of short chain beta-hydroxyacyl-ACPs and long chain saturated and unsaturated beta-hydroxyacyl-ACPs. This Exiguobacterium sibiricum (strain DSM 17290 / CCUG 55495 / CIP 109462 / JCM 13490 / 255-15) protein is 3-hydroxyacyl-[acyl-carrier-protein] dehydratase FabZ.